The following is a 156-amino-acid chain: Ribonuclease pancreatic (156 aa).

A signal peptide spans 1–28 (MALEKSLVLLPLFVLMLLVLGWVQPSLG). 2 residues coordinate substrate: K35 and R38. Residue H40 is the Proton acceptor of the active site. Residues N50 and N62 are each glycosylated (N-linked (GlcNAc...) asparagine). Intrachain disulfides connect C54–C112, C68–C123, C86–C138, and C93–C100. Residues 69–73 (KPVNT) and K94 each bind substrate. N104 is a glycosylation site (N-linked (GlcNAc...) asparagine). R113 serves as a coordination point for substrate. N116 carries N-linked (GlcNAc...) asparagine glycosylation. The active-site Proton donor is the H147.

Belongs to the pancreatic ribonuclease family. Monomer. Interacts with and forms tight 1:1 complexes with RNH1. Dimerization of two such complexes may occur. Interaction with RNH1 inhibits this protein.

The protein resides in the secreted. It carries out the reaction an [RNA] containing cytidine + H2O = an [RNA]-3'-cytidine-3'-phosphate + a 5'-hydroxy-ribonucleotide-3'-[RNA].. The catalysed reaction is an [RNA] containing uridine + H2O = an [RNA]-3'-uridine-3'-phosphate + a 5'-hydroxy-ribonucleotide-3'-[RNA].. Endonuclease that catalyzes the cleavage of RNA on the 3' side of pyrimidine nucleotides. Acts on single-stranded and double-stranded RNA. In Nomascus leucogenys (Northern white-cheeked gibbon), this protein is Ribonuclease pancreatic (RNASE1).